The following is a 703-amino-acid chain: Lactococcin-G-processing and transport ATP-binding protein LagD (703 aa).

One can recognise a Peptidase C39 domain in the interval 7–132 (QQDEKDCGVA…KEWTGVLLFP (126 aa)). Cysteine 13 is a catalytic residue. The 283-residue stretch at 153–435 (PILIKQKSLF…IINLQVKMQK (283 aa)) folds into the ABC transmembrane type-1 domain. 7 helical membrane-spanning segments follow: residues 162-182 (FITIFGIISSYYFQGLLDNII), 189-209 (TLNILSIGLIFVYLFRVLFEY), 224-244 (MSIMLGYFKHVLSLPLSFFAT), 267-287 (ATLSLILDIGMVILVGTTLAI), 291-311 (QLFLLTLAFLPFYILVVYVFI), 381-401 (MVIELISSVLILWLGSSYVID), and 409-429 (LITYNALLVFFTEPLQNIINL). An ABC transporter domain is found at 469-703 (IKLDKVSFSY…EGVYRRLLNA (235 aa)). 502 to 509 (GVSGSGKS) is a binding site for ATP.

Belongs to the ABC transporter superfamily. LagD family. As to quaternary structure, homodimer.

It localises to the cell membrane. LagD (TC 3.A.1) is involved in processing the signal peptide and probably also in export of the bacteriocin lactococcin G. The polypeptide is Lactococcin-G-processing and transport ATP-binding protein LagD (lagD) (Lactococcus lactis subsp. lactis (Streptococcus lactis)).